Here is a 224-residue protein sequence, read N- to C-terminus: MSIRSWPAAERPRERLLELGAASLSDAELLAIFLRTGVAGKSAVDLARHLLNQFDGLRSLLDADQPAFTAQLGLGPAKFAQLQAVMEMARRHMAESLRRDSALENPAQVRNYLKAQLRHEPHEVFACLFLDNKHRVMTFEILFRGTINASYVHPRQVVKRALAHNAASLILCHNHPSGITTPSRSDIDLTKRLKEALKLVDVHVLDHVIVGDGEPLSMVEKGLM.

The region spanning 102-224 (ALENPAQVRN…PLSMVEKGLM (123 aa)) is the MPN domain. Residues His173, His175, and Asp186 each coordinate Zn(2+). Residues 173–186 (HNHPSGITTPSRSD) carry the JAMM motif motif.

Belongs to the UPF0758 family.

This is UPF0758 protein PSPTO_0086 from Pseudomonas syringae pv. tomato (strain ATCC BAA-871 / DC3000).